A 32-amino-acid chain; its full sequence is DECFSPGTFCGIKPGLCCSARCLSFFCISLEF.

Disulfide bonds link cysteine 3–cysteine 18, cysteine 10–cysteine 22, and cysteine 17–cysteine 27. A 4-hydroxyproline mark is found at proline 6 and proline 14.

Belongs to the conotoxin O1 superfamily. In terms of tissue distribution, expressed by the venom duct.

It localises to the secreted. In terms of biological role, delta-conotoxins bind to site 6 of voltage-gated sodium channels (Nav) and inhibit the inactivation process. This toxin acts on Nav1.2/SCN2A, Nav1.4/SCN4A, Nav1.5/SCN5A (weak activity), Nav1.6/SCN8A (EC(50)=2.5 uM). The sequence is that of Delta-conotoxin-like CnVIC from Conus consors (Singed cone).